A 165-amino-acid polypeptide reads, in one-letter code: 5-formyltetrahydrofolate cyclo-ligase (165 aa).

4-8 (KNSLR) is an ATP binding site. Residues Ile-51 and Glu-56 each contribute to the substrate site. 116–124 (RIGFGKGYY) contributes to the ATP binding site. Asp-125 contributes to the Mg(2+) binding site. Residues Arg-126 and Trp-154 each coordinate ATP. Asp-155 contacts Mg(2+).

The protein belongs to the 5-formyltetrahydrofolate cyclo-ligase family. Monomer or homodimer. The cofactor is Mg(2+).

The protein localises to the cytoplasm. The enzyme catalyses (6S)-5-formyl-5,6,7,8-tetrahydrofolate + ATP = (6R)-5,10-methenyltetrahydrofolate + ADP + phosphate. Involved in folate metabolism. Catalyzes the irreversible conversion of 5-formyltetrahydrofolate (5-FTHF) to yield 5,10-methenyltetrahydrofolate. This is 5-formyltetrahydrofolate cyclo-ligase from Mycoplasma genitalium (strain ATCC 33530 / DSM 19775 / NCTC 10195 / G37) (Mycoplasmoides genitalium).